A 293-amino-acid polypeptide reads, in one-letter code: Probable porphobilinogen deaminase (293 aa).

Residue Cys-233 is modified to S-(dipyrrolylmethanemethyl)cysteine.

Belongs to the HMBS family. Dipyrromethane serves as cofactor.

It carries out the reaction 4 porphobilinogen + H2O = hydroxymethylbilane + 4 NH4(+). It participates in porphyrin-containing compound metabolism; protoporphyrin-IX biosynthesis; coproporphyrinogen-III from 5-aminolevulinate: step 2/4. Its function is as follows. Tetrapolymerization of the monopyrrole PBG into the hydroxymethylbilane pre-uroporphyrinogen in several discrete steps. The protein is Probable porphobilinogen deaminase of Saccharolobus islandicus (strain L.S.2.15 / Lassen #1) (Sulfolobus islandicus).